A 296-amino-acid chain; its full sequence is MNLQTMIRTLQDYWSEQDCIMLQSYDVEKGAGTMSPYTFLKAIGPEPWKAGYVEPSRRPADGRYGENPNRLFQHHQFQVVMKPSPDNIQELYLGSLEKLGINPLEHDIRFVEDNWENPSLGCAGLGWEVWLDGMEITQFTYFQQVGGLECFPVTSEITYGVERLASYIQDKENVFDLEWTEGISYRDIFFQAEFENSKYAFETSNTDMLLTLFDTYEREAARQMQEGLVFPAYDYVLKCSHTFNLLDARGVVSVTERAQYIGRIRNLARRIAKTFYESREKLGFPLVKEEGGKRHE.

This sequence belongs to the class-II aminoacyl-tRNA synthetase family. As to quaternary structure, tetramer of two alpha and two beta subunits.

It localises to the cytoplasm. It carries out the reaction tRNA(Gly) + glycine + ATP = glycyl-tRNA(Gly) + AMP + diphosphate. This chain is Glycine--tRNA ligase alpha subunit, found in Listeria innocua serovar 6a (strain ATCC BAA-680 / CLIP 11262).